The primary structure comprises 118 residues: Small ribosomal subunit protein uS13 (118 aa).

The interval glycine 94–serine 118 is disordered.

Belongs to the universal ribosomal protein uS13 family. Part of the 30S ribosomal subunit. Forms a loose heterodimer with protein S19. Forms two bridges to the 50S subunit in the 70S ribosome.

Its function is as follows. Located at the top of the head of the 30S subunit, it contacts several helices of the 16S rRNA. In the 70S ribosome it contacts the 23S rRNA (bridge B1a) and protein L5 of the 50S subunit (bridge B1b), connecting the 2 subunits; these bridges are implicated in subunit movement. Contacts the tRNAs in the A and P-sites. The chain is Small ribosomal subunit protein uS13 from Legionella pneumophila (strain Paris).